The following is a 186-amino-acid chain: Methyl-CpG-binding domain protein 3-like 1 (186 aa).

A transcription repressor region spans residues 1–104; sequence MGKTSQRKQC…TSTDTVASAS (104 aa).

This sequence belongs to the MBD3L family. As to expression, highly expressed in testis. Not detected in the other tissues tested.

The protein resides in the nucleus. Its function is as follows. Transcriptional repressor. The chain is Methyl-CpG-binding domain protein 3-like 1 (Mbd3l1) from Mus musculus (Mouse).